The sequence spans 207 residues: Sodium/potassium-transporting ATPase subunit beta-1-interacting protein 1 (207 aa).

The next 3 helical transmembrane spans lie at 2-22, 35-55, and 62-82; these read GRCSGRCTLVGICCLQLAAAL, APILANFLHIMVVILGILGTL, and LILYSIWLALWVAWNAFIICF. Residue Asn100 is glycosylated (N-linked (GlcNAc...) asparagine). Residues 147-167 traverse the membrane as a helical segment; sequence ALSSALQIFLALFGFVYACYV.

Belongs to the NKAIN family. Interacts with atp1b1 C-terminus.

It localises to the cell membrane. This chain is Sodium/potassium-transporting ATPase subunit beta-1-interacting protein 1 (nkain1), found in Xenopus tropicalis (Western clawed frog).